We begin with the raw amino-acid sequence, 337 residues long: Glyceraldehyde-3-phosphate dehydrogenase 2 (337 aa).

NADP(+)-binding positions include 11–12 (RI), Asp35, Arg80, and Thr122. D-glyceraldehyde 3-phosphate contacts are provided by residues 153–155 (SCT), Thr184, Arg199, 212–213 (TG), and Arg235. Catalysis depends on Cys154, which acts as the Nucleophile. Residue Asn317 coordinates NADP(+).

As to quaternary structure, homotetramer.

The protein localises to the cytoplasm. The enzyme catalyses D-glyceraldehyde 3-phosphate + phosphate + NADP(+) = (2R)-3-phospho-glyceroyl phosphate + NADPH + H(+). It carries out the reaction D-glyceraldehyde 3-phosphate + phosphate + NAD(+) = (2R)-3-phospho-glyceroyl phosphate + NADH + H(+). The protein operates within carbohydrate biosynthesis; Calvin cycle. Gap2 has a major role in carbon fixation as a component of the Calvin cycle. Catalyzes the oxidative phosphorylation of glyceraldehyde 3-phosphate (G3P) to 1,3-bisphosphoglycerate (BPG) using the cofactor NADP. The first reaction step involves the formation of a hemiacetal intermediate between G3P and a cysteine residue, and this hemiacetal intermediate is then oxidized to a thioester, with concomitant reduction of NADP to NADPH. The reduced NADPH is then exchanged with the second NAD, and the thioester is attacked by a nucleophilic inorganic phosphate to produce BPG. This is Glyceraldehyde-3-phosphate dehydrogenase 2 (gap2) from Nostoc sp. (strain PCC 7120 / SAG 25.82 / UTEX 2576).